A 599-amino-acid polypeptide reads, in one-letter code: Elongation factor 4 (599 aa).

The tr-type G domain occupies 2-185 (KYIRNFSIIA…RIIIDIPVPQ (184 aa)). Residues 14-19 (NHGKST) and 132-135 (NKID) contribute to the GTP site.

It belongs to the TRAFAC class translation factor GTPase superfamily. Classic translation factor GTPase family. LepA subfamily.

The protein resides in the cell inner membrane. The catalysed reaction is GTP + H2O = GDP + phosphate + H(+). Required for accurate and efficient protein synthesis under certain stress conditions. May act as a fidelity factor of the translation reaction, by catalyzing a one-codon backward translocation of tRNAs on improperly translocated ribosomes. Back-translocation proceeds from a post-translocation (POST) complex to a pre-translocation (PRE) complex, thus giving elongation factor G a second chance to translocate the tRNAs correctly. Binds to ribosomes in a GTP-dependent manner. The protein is Elongation factor 4 of Blochmanniella floridana.